The following is a 138-amino-acid chain: Ribosome-binding factor A (138 aa).

Positions 1 to 20 are enriched in low complexity; sequence MSSRPPSSSGPAGIPKGAPS. The interval 1–21 is disordered; the sequence is MSSRPPSSSGPAGIPKGAPSQ.

This sequence belongs to the RbfA family. As to quaternary structure, monomer. Binds 30S ribosomal subunits, but not 50S ribosomal subunits or 70S ribosomes.

It is found in the cytoplasm. Functionally, one of several proteins that assist in the late maturation steps of the functional core of the 30S ribosomal subunit. Associates with free 30S ribosomal subunits (but not with 30S subunits that are part of 70S ribosomes or polysomes). Required for efficient processing of 16S rRNA. May interact with the 5'-terminal helix region of 16S rRNA. The protein is Ribosome-binding factor A of Granulibacter bethesdensis (strain ATCC BAA-1260 / CGDNIH1).